A 358-amino-acid polypeptide reads, in one-letter code: Molybdenum import ATP-binding protein ModC (358 aa).

The ABC transporter domain maps to 2-234; sequence NDDISASFFS…PDLPLAHLEE (233 aa). Position 34 to 41 (34 to 41) interacts with ATP; it reads GRSGSGKT. Positions 293–358 constitute a Mop domain; that stretch reads LSSISNCIPV…AQVKSVALID (66 aa).

It belongs to the ABC transporter superfamily. Molybdate importer (TC 3.A.1.8) family. The complex is composed of two ATP-binding proteins (ModC), two transmembrane proteins (ModB) and a solute-binding protein (ModA).

It localises to the cell inner membrane. It carries out the reaction molybdate(out) + ATP + H2O = molybdate(in) + ADP + phosphate + H(+). Its function is as follows. Part of the ABC transporter complex ModABC involved in molybdenum import. Responsible for energy coupling to the transport system. This chain is Molybdenum import ATP-binding protein ModC, found in Hahella chejuensis (strain KCTC 2396).